Here is a 307-residue protein sequence, read N- to C-terminus: Malonyl-[acyl-carrier protein] O-methyltransferase (307 aa).

This sequence belongs to the methyltransferase superfamily.

The catalysed reaction is malonyl-[ACP] + S-adenosyl-L-methionine = malonyl-[ACP] methyl ester + S-adenosyl-L-homocysteine. The protein operates within cofactor biosynthesis; biotin biosynthesis. In terms of biological role, converts the free carboxyl group of a malonyl-thioester to its methyl ester by transfer of a methyl group from S-adenosyl-L-methionine (SAM). It allows to synthesize pimeloyl-ACP via the fatty acid synthetic pathway. This chain is Malonyl-[acyl-carrier protein] O-methyltransferase, found in Nitrosospira multiformis (strain ATCC 25196 / NCIMB 11849 / C 71).